We begin with the raw amino-acid sequence, 54 residues long: Metallothionein-2 (54 aa).

The protein belongs to the metallothionein superfamily. Type 11 family.

The polypeptide is Metallothionein-2 (MTP2) (Yarrowia lipolytica (strain CLIB 122 / E 150) (Yeast)).